The primary structure comprises 654 residues: Probable Xaa-Pro aminopeptidase P (654 aa).

The Mn(2+) site is built by aspartate 451, aspartate 462, glutamate 560, and glutamate 574.

The protein belongs to the peptidase M24B family. The cofactor is Mn(2+).

It carries out the reaction Release of any N-terminal amino acid, including proline, that is linked to proline, even from a dipeptide or tripeptide.. Catalyzes the removal of a penultimate prolyl residue from the N-termini of peptides. This is Probable Xaa-Pro aminopeptidase P (ampp) from Botryotinia fuckeliana (strain B05.10) (Noble rot fungus).